Here is a 292-residue protein sequence, read N- to C-terminus: Alpha-soluble NSF attachment protein (292 aa).

Ser2 bears the N-acetylserine mark. Lys261 participates in a covalent cross-link: Glycyl lysine isopeptide (Lys-Gly) (interchain with G-Cter in ubiquitin).

Belongs to the SNAP family. In terms of assembly, binds to vacuolar cis-SNARE complexes composed of the v-SNAREs NYV1, VTI1 and YKT6, and the t-SNAREs VAM3 and VAM7. Interacts with SEC18.

The protein resides in the membrane. In terms of biological role, SNARE complex protein that binds to cis-SNARE complexes on membranes and is required for vesicular transport between the endoplasmic reticulum and the Golgi apparatus and for homotypic vacuole fusion. During the priming step of membrane fusion, is released from cis-SNARE complexes by SEC18 to establish a pool of unpaired SNAREs, which are required for interactions in trans during docking and fusion steps. Can displace HOPS from SNARE complexes, which may be a prerequisite for trans-SNARE complex disassembly and subsequent rounds of priming, docking and fusion. In Saccharomyces cerevisiae (strain ATCC 204508 / S288c) (Baker's yeast), this protein is Alpha-soluble NSF attachment protein (SEC17).